The following is a 101-amino-acid chain: Chaperone modulatory protein CbpM (101 aa).

This sequence belongs to the CbpM family.

In terms of biological role, interacts with CbpA and inhibits both the DnaJ-like co-chaperone activity and the DNA binding activity of CbpA. Together with CbpA, modulates the activity of the DnaK chaperone system. Does not inhibit the co-chaperone activity of DnaJ. This is Chaperone modulatory protein CbpM from Pseudomonas putida (strain GB-1).